Consider the following 610-residue polypeptide: Menin (610 aa).

The interaction with FANCD2 stretch occupies residues 214–390; that stretch reads GVAERSWLYL…SLLEAGEERP (177 aa). The interval 460–552 is disordered; the sequence is REAEAAEAEE…SPPPEGPVLT (93 aa). Over residues 484–500 the composition is skewed to basic and acidic residues; the sequence is RRESKPEEPPPPKKPAL. Phosphoserine is present on residues Ser-487 and Ser-543. Thr-594 carries the post-translational modification Phosphothreonine.

As to quaternary structure, component of the MLL-HCF complex, at least composed of KMT2A/MLL1, MEN1, ASH2L, RBBP5, DPY30, WDR5, HCFC1 and HCFC2. Component of the menin-associated histone methyltransferase complex, at least composed of KMT2B/MLL4, MEN1, ASH2L, RBBP5, DPY30 and WDR5. Interacts with POLR2B. Interacts with POLR2A phosphorylated at 'Ser-5', but not with the unphosphorylated, nor 'Ser-2' phosphorylated POLR2A forms. Interacts with FANCD2 and DBF4. Interacts with SMAD3, but not with SMAD2, nor SMAD4. Directly interacts with NFKB1, NFKB2 and RELA. Interacts with JUND (via MBM motif); inhibits the interaction of JUND with MAPK10 and the phosphorylation of JUND by MAP kinases MAPK8 and MAPK10. Interacts with KMT2A (via MBM motif). The KMT2A-MEN1 complex interacts with PSIP1 with a greater affinity as MEN1 enhances interaction of KMT2A with PSIP1. Widely expressed, including in the pituitary, brain, large intestine, spleen, kidney, adrenal gland, ovary, testis, thymus, lung, epididymis, bone marrow, pancreatic islets and placenta.

Its subcellular location is the nucleus. Its function is as follows. Essential component of a MLL/SET1 histone methyltransferase (HMT) complex, a complex that specifically methylates 'Lys-4' of histone H3 (H3K4). Functions as a transcriptional regulator. Binds to the TERT promoter and represses telomerase expression. Represses JUND-mediated transcriptional activation on AP1 sites, as well as that mediated by NFKB subunit RELA. Positively regulates HOXC8 and HOXC6 gene expression. May be involved in normal hematopoiesis through the activation of HOXA9 expression. May be involved in DNA repair. Plays a role in TGFB1-mediated inhibition of cell-proliferation, possibly regulating SMAD3 transcriptional activity. The protein is Menin (Men1) of Rattus norvegicus (Rat).